We begin with the raw amino-acid sequence, 578 residues long: Phosphoenolpyruvate-protein phosphotransferase (578 aa).

Residue H195 is the Tele-phosphohistidine intermediate of the active site. The phosphoenolpyruvate site is built by R302 and R338. Residues E437 and D461 each coordinate Mg(2+). Residues 460–461 (ND) and R471 each bind phosphoenolpyruvate. C508 functions as the Proton donor in the catalytic mechanism.

It belongs to the PEP-utilizing enzyme family. In terms of assembly, homodimer. Mg(2+) is required as a cofactor.

Its subcellular location is the cytoplasm. It catalyses the reaction L-histidyl-[protein] + phosphoenolpyruvate = N(pros)-phospho-L-histidyl-[protein] + pyruvate. Functionally, general (non sugar-specific) component of the phosphoenolpyruvate-dependent sugar phosphotransferase system (sugar PTS). This major carbohydrate active-transport system catalyzes the phosphorylation of incoming sugar substrates concomitantly with their translocation across the cell membrane. Enzyme I transfers the phosphoryl group from phosphoenolpyruvate (PEP) to the phosphoryl carrier protein (HPr). The chain is Phosphoenolpyruvate-protein phosphotransferase (ptsI) from Bacillus sp. (strain S).